The following is a 310-amino-acid chain: Methionyl-tRNA formyltransferase (310 aa).

(6S)-5,6,7,8-tetrahydrofolate is bound at residue 109-112 (SLLP).

The protein belongs to the Fmt family.

It carries out the reaction L-methionyl-tRNA(fMet) + (6R)-10-formyltetrahydrofolate = N-formyl-L-methionyl-tRNA(fMet) + (6S)-5,6,7,8-tetrahydrofolate + H(+). Its function is as follows. Attaches a formyl group to the free amino group of methionyl-tRNA(fMet). The formyl group appears to play a dual role in the initiator identity of N-formylmethionyl-tRNA by promoting its recognition by IF2 and preventing the misappropriation of this tRNA by the elongation apparatus. This chain is Methionyl-tRNA formyltransferase, found in Staphylococcus epidermidis (strain ATCC 12228 / FDA PCI 1200).